The sequence spans 812 residues: ATP-dependent DNA helicase PIF3 (812 aa).

Residue 247 to 254 (GSAGTGKT) coordinates ATP. Residues 741 to 761 (HLVYVACSRVRSMDQLIVRNV) mediate DNA binding.

It belongs to the helicase family. PIF1 subfamily. In terms of assembly, monomer. It depends on Mg(2+) as a cofactor.

It is found in the cytoplasm. The catalysed reaction is Couples ATP hydrolysis with the unwinding of duplex DNA at the replication fork by translocating in the 5'-3' direction. This creates two antiparallel DNA single strands (ssDNA). The leading ssDNA polymer is the template for DNA polymerase III holoenzyme which synthesizes a continuous strand.. It catalyses the reaction ATP + H2O = ADP + phosphate + H(+). Functionally, DNA-dependent ATPase and 5'-3' DNA helicase required for the maintenance of genome stability. The polypeptide is ATP-dependent DNA helicase PIF3 (Trypanosoma brucei brucei (strain 927/4 GUTat10.1)).